Consider the following 497-residue polypeptide: UDP-N-acetylmuramoyl-L-alanyl-D-glutamate--2,6-diaminopimelate ligase (497 aa).

UDP-N-acetyl-alpha-D-muramoyl-L-alanyl-D-glutamate is bound at residue Ser32. 113–119 (GTNGKTT) lines the ATP pocket. UDP-N-acetyl-alpha-D-muramoyl-L-alanyl-D-glutamate contacts are provided by residues 155 to 156 (TT), Ser182, Gln188, and Arg190. The residue at position 222 (Lys222) is an N6-carboxylysine. Meso-2,6-diaminopimelate-binding positions include Arg385, 409-412 (DNPR), Gly460, and Glu464. The Meso-diaminopimelate recognition motif signature appears at 409 to 412 (DNPR).

It belongs to the MurCDEF family. MurE subfamily. It depends on Mg(2+) as a cofactor. In terms of processing, carboxylation is probably crucial for Mg(2+) binding and, consequently, for the gamma-phosphate positioning of ATP.

It localises to the cytoplasm. It carries out the reaction UDP-N-acetyl-alpha-D-muramoyl-L-alanyl-D-glutamate + meso-2,6-diaminopimelate + ATP = UDP-N-acetyl-alpha-D-muramoyl-L-alanyl-gamma-D-glutamyl-meso-2,6-diaminopimelate + ADP + phosphate + H(+). It participates in cell wall biogenesis; peptidoglycan biosynthesis. In terms of biological role, catalyzes the addition of meso-diaminopimelic acid to the nucleotide precursor UDP-N-acetylmuramoyl-L-alanyl-D-glutamate (UMAG) in the biosynthesis of bacterial cell-wall peptidoglycan. The sequence is that of UDP-N-acetylmuramoyl-L-alanyl-D-glutamate--2,6-diaminopimelate ligase from Thermosynechococcus vestitus (strain NIES-2133 / IAM M-273 / BP-1).